We begin with the raw amino-acid sequence, 295 residues long: Light-independent protochlorophyllide reductase iron-sulfur ATP-binding protein (295 aa).

Residues Gly-39–Thr-44 and Lys-68 contribute to the ATP site. Ser-43 is a binding site for Mg(2+). Positions 124 and 158 each coordinate [4Fe-4S] cluster. Asn-209–Arg-210 contributes to the ATP binding site.

This sequence belongs to the NifH/BchL/ChlL family. As to quaternary structure, homodimer. Protochlorophyllide reductase is composed of three subunits; ChlL, ChlN and ChlB. [4Fe-4S] cluster is required as a cofactor.

It carries out the reaction chlorophyllide a + oxidized 2[4Fe-4S]-[ferredoxin] + 2 ADP + 2 phosphate = protochlorophyllide a + reduced 2[4Fe-4S]-[ferredoxin] + 2 ATP + 2 H2O. It participates in porphyrin-containing compound metabolism; chlorophyll biosynthesis (light-independent). In terms of biological role, component of the dark-operative protochlorophyllide reductase (DPOR) that uses Mg-ATP and reduced ferredoxin to reduce ring D of protochlorophyllide (Pchlide) to form chlorophyllide a (Chlide). This reaction is light-independent. The L component serves as a unique electron donor to the NB-component of the complex, and binds Mg-ATP. The chain is Light-independent protochlorophyllide reductase iron-sulfur ATP-binding protein from Prochlorococcus marinus (strain MIT 9215).